The primary structure comprises 324 residues: ATP-dependent 6-phosphofructokinase (324 aa).

An ATP-binding site is contributed by G15. R25–R29 is an ADP binding site. Residues R76–F77 and G106–S109 contribute to the ATP site. Position 107 (D107) interacts with Mg(2+). T130–D132 provides a ligand contact to substrate. D132 serves as the catalytic Proton acceptor. R159 is a binding site for ADP. Residues R167 and M174–R176 contribute to the substrate site. Residues G190–E192, K216, and K218–H220 each bind ADP. Substrate is bound by residues E227, R248, and H254–R257.

This sequence belongs to the phosphofructokinase type A (PFKA) family. ATP-dependent PFK group I subfamily. Prokaryotic clade 'B1' sub-subfamily. In terms of assembly, homotetramer. Mg(2+) is required as a cofactor.

The protein resides in the cytoplasm. It catalyses the reaction beta-D-fructose 6-phosphate + ATP = beta-D-fructose 1,6-bisphosphate + ADP + H(+). It functions in the pathway carbohydrate degradation; glycolysis; D-glyceraldehyde 3-phosphate and glycerone phosphate from D-glucose: step 3/4. With respect to regulation, allosterically activated by ADP and other diphosphonucleosides, and allosterically inhibited by phosphoenolpyruvate. In terms of biological role, catalyzes the phosphorylation of D-fructose 6-phosphate to fructose 1,6-bisphosphate by ATP, the first committing step of glycolysis. This is ATP-dependent 6-phosphofructokinase from Haemophilus ducreyi (strain 35000HP / ATCC 700724).